We begin with the raw amino-acid sequence, 386 residues long: Agamous-like MADS-box protein AGL30 (386 aa).

The MADS-box domain occupies Met-1 to Lys-53. Residues Pro-341–Ser-360 form a disordered region. The segment covering Ser-344–Gly-356 has biased composition (polar residues).

Forms heterodimers with AGL66 and AGL104. As to expression, expressed in pollen.

Its subcellular location is the nucleus. Probable transcription factor that forms heterodimers with the MADS-box proteins AGL66 and AGL104 and is involved in the regulation of pollen maturation at the late stages of pollen development and pollen tube growth. This is Agamous-like MADS-box protein AGL30 from Arabidopsis thaliana (Mouse-ear cress).